The primary structure comprises 111 residues: uncharacterized protein (111 aa).

A helical transmembrane segment spans residues 64-86; it reads VLCWLVLPLYCCNLLNLFFNIFL.

It localises to the membrane. This is an uncharacterized protein from Saccharomyces cerevisiae (strain ATCC 204508 / S288c) (Baker's yeast).